A 158-amino-acid chain; its full sequence is NAD(P)H-quinone oxidoreductase subunit J, chloroplastic (158 aa).

Belongs to the complex I 30 kDa subunit family. In terms of assembly, NDH is composed of at least 16 different subunits, 5 of which are encoded in the nucleus.

Its subcellular location is the plastid. The protein resides in the chloroplast thylakoid membrane. The enzyme catalyses a plastoquinone + NADH + (n+1) H(+)(in) = a plastoquinol + NAD(+) + n H(+)(out). It carries out the reaction a plastoquinone + NADPH + (n+1) H(+)(in) = a plastoquinol + NADP(+) + n H(+)(out). NDH shuttles electrons from NAD(P)H:plastoquinone, via FMN and iron-sulfur (Fe-S) centers, to quinones in the photosynthetic chain and possibly in a chloroplast respiratory chain. The immediate electron acceptor for the enzyme in this species is believed to be plastoquinone. Couples the redox reaction to proton translocation, and thus conserves the redox energy in a proton gradient. The sequence is that of NAD(P)H-quinone oxidoreductase subunit J, chloroplastic from Lactuca sativa (Garden lettuce).